We begin with the raw amino-acid sequence, 367 residues long: Cyclic AMP-responsive element-binding protein 3-like protein 4 (367 aa).

Residues 1–52 are required for transcriptional activation; the sequence is MELGCPELLEPPEDIFSTGSFLELGFNGPPSKVPGLQKSESDDFLNLFIDPN. Topologically, residues 1-267 are cytoplasmic; it reads MELGCPELLE…QTSSRAAQTS (267 aa). The interval 58-81 is disordered; the sequence is ETSPGSDSGVSEDPGSPAPQAPSS. The bZIP domain occupies 189-252; that stretch reads ILKKIRRKIR…ISLVAQVHQL (64 aa). The interval 191 to 230 is basic motif; that stretch reads KKIRRKIRNKQSAQDSRRRKKEYIDGLESRVAACSEQNQK. Positions 231-252 are leucine-zipper; sequence LQRKVQELERQNISLVAQVHQL. Residues 268–288 traverse the membrane as a helical; Signal-anchor for type II membrane protein segment; sequence TCVLILLFSLALIILPSFSPF. At 289–367 the chain is on the lumenal side; sequence QSQPEARSEG…IRGMVHADEM (79 aa). Asparagine 338 carries an N-linked (GlcNAc...) asparagine glycan.

The protein belongs to the bZIP family. ATF subfamily. In terms of assembly, binds DNA as a dimer. Forms a heterodimer with CREM isoform Delta. Post-translationally, controlled by regulated intramembrane proteolysis (RIP). Following ER stress a fragment containing the cytoplasmic transcription factor domain is released by proteolysis. The cleavage seems to be performed sequentially by site-1 and site-2 proteases (PS1 and PS2). PS1 cleavage may be suppressed by a determinant in the C-terminal region.

Its subcellular location is the endoplasmic reticulum membrane. The protein localises to the nucleus. Its function is as follows. Transcriptional activator that may play a role in the unfolded protein response. Binds to the UPR element (UPRE) but not to CRE element. Preferentially binds DNA with to the consensus sequence 5'-T[GT]ACGT[GA][GT]-3' and has transcriptional activation activity from UPRE. Binds to NF-kappa-B site and has transcriptional activation activity from NF-kappa-B-containing regulatory elements. Increases the binding of CREM isoform Delta with CRE. The CREM isoform Delta-CREB3L4 heterodimer functions through CRE but not through UPRE and may recruit HIRA to CRE to regulate histone exchange. This chain is Cyclic AMP-responsive element-binding protein 3-like protein 4 (Creb3l4), found in Rattus norvegicus (Rat).